Consider the following 350-residue polypeptide: N(4)-bis(aminopropyl)spermidine synthase (350 aa).

The protein belongs to the branched-chain polyamine synthase family.

Its subcellular location is the cytoplasm. The enzyme catalyses 2 S-adenosyl 3-(methylsulfanyl)propylamine + spermidine = N(4)-bis(aminopropyl)spermidine + 2 S-methyl-5'-thioadenosine + 2 H(+). The protein operates within amine and polyamine biosynthesis. Its function is as follows. Involved in the biosynthesis of branched-chain polyamines, which support the growth of thermophiles under high-temperature conditions. Catalyzes the sequential condensation of spermidine with the aminopropyl groups of decarboxylated S-adenosylmethionines to produce N(4)-bis(aminopropyl)spermidine via N(4)-aminopropylspermidine. The polypeptide is N(4)-bis(aminopropyl)spermidine synthase (Methanocaldococcus jannaschii (strain ATCC 43067 / DSM 2661 / JAL-1 / JCM 10045 / NBRC 100440) (Methanococcus jannaschii)).